A 796-amino-acid chain; its full sequence is Lon protease (796 aa).

The Lon N-terminal domain occupies leucine 19 to proline 213. Residue glycine 376–threonine 383 coordinates ATP. The Lon proteolytic domain maps to glutamate 612–asparagine 793. Active-site residues include serine 699 and lysine 742.

The protein belongs to the peptidase S16 family. Homohexamer. Organized in a ring with a central cavity.

It localises to the cytoplasm. The catalysed reaction is Hydrolysis of proteins in presence of ATP.. In terms of biological role, ATP-dependent serine protease that mediates the selective degradation of mutant and abnormal proteins as well as certain short-lived regulatory proteins. Required for cellular homeostasis and for survival from DNA damage and developmental changes induced by stress. Degrades polypeptides processively to yield small peptide fragments that are 5 to 10 amino acids long. Binds to DNA in a double-stranded, site-specific manner. The polypeptide is Lon protease (Mycoplasma mycoides subsp. mycoides SC (strain CCUG 32753 / NCTC 10114 / PG1)).